We begin with the raw amino-acid sequence, 326 residues long: Apoptosis facilitator Bcl-2-like protein 14 (326 aa).

At Ser-44 the chain carries Phosphoserine. The tract at residues 99–127 (TEKEEEPPSSPKEIHAQGPFPVERQGRNQ) is disordered. Positions 211-225 (IVELLKYSGDQLGRE) match the BH3 motif. The short motif at 307–314 (WVQQNGGW) is the BH2 element.

It belongs to the Bcl-2 family. In terms of processing, phosphorylated by MELK, leading to inhibit its pro-apoptotic function.

The protein resides in the cytoplasm. Functionally, plays a role in apoptosis. In Rattus norvegicus (Rat), this protein is Apoptosis facilitator Bcl-2-like protein 14 (Bcl2l14).